Consider the following 347-residue polypeptide: Dual specificity mitogen-activated protein kinase kinase 3 (347 aa).

Met-1 is modified (N-acetylmethionine). Over residues 1-15 (MESPASSQPASMPQS) the composition is skewed to low complexity. The disordered stretch occupies residues 1–46 (MESPASSQPASMPQSKGKSKRKKDLRISCMSKPPAPNPTPPRNLDS). Residues Ser-3 and Ser-15 each carry the phosphoserine modification. In terms of domain architecture, Protein kinase spans 64–325 (LVTISELGRG…YLELMEHPFF (262 aa)). ATP is bound by residues 70 to 78 (LGRGAYGVV) and Lys-93. Asp-190 acts as the Proton acceptor in catalysis. Phosphoserine is present on Ser-218. Thr-222 carries the post-translational modification Phosphothreonine.

Belongs to the protein kinase superfamily. STE Ser/Thr protein kinase family. MAP kinase kinase subfamily. As to quaternary structure, component of a signaling complex containing at least AKAP13, PKN1, MAPK14, ZAK and MAP2K3. Within this complex, AKAP13 interacts directly with PKN1, which in turn recruits MAPK14, MAP2K3 and ZAK. Binds to DYRK1B/MIRK and increases its kinase activity. Part of a complex with MAP3K3, RAC1 and CCM2. Interacts with ARRB1. (Microbial infection) Interacts with Yersinia YopJ. Post-translationally, autophosphorylated. Phosphorylation on Ser-218 and Thr-222 by MAP kinase kinase kinases positively regulates the kinase activity. Phosphorylated by TAOK2. In terms of processing, (Microbial infection) Yersinia YopJ may acetylate Ser/Thr residues, preventing phosphorylation and activation, thus blocking the MAPK signaling pathway. In terms of tissue distribution, abundant expression is seen in the skeletal muscle. It is also widely expressed in other tissues.

It catalyses the reaction L-seryl-[protein] + ATP = O-phospho-L-seryl-[protein] + ADP + H(+). It carries out the reaction L-threonyl-[protein] + ATP = O-phospho-L-threonyl-[protein] + ADP + H(+). The catalysed reaction is L-tyrosyl-[protein] + ATP = O-phospho-L-tyrosyl-[protein] + ADP + H(+). Activated by dual phosphorylation on Ser-218 and Thr-222. Functionally, dual specificity kinase. Is activated by cytokines and environmental stress in vivo. Catalyzes the concomitant phosphorylation of a threonine and a tyrosine residue in the MAP kinase p38. Part of a signaling cascade that begins with the activation of the adrenergic receptor ADRA1B and leads to the activation of MAPK14. The polypeptide is Dual specificity mitogen-activated protein kinase kinase 3 (MAP2K3) (Homo sapiens (Human)).